A 512-amino-acid polypeptide reads, in one-letter code: Maturase K (512 aa).

The protein belongs to the intron maturase 2 family. MatK subfamily.

It is found in the plastid. The protein localises to the chloroplast. In terms of biological role, usually encoded in the trnK tRNA gene intron. Probably assists in splicing its own and other chloroplast group II introns. This chain is Maturase K, found in Piper cenocladum (Ant piper).